The sequence spans 258 residues: Aspartate/glutamate leucyltransferase (258 aa).

The protein belongs to the R-transferase family. Bpt subfamily.

The protein localises to the cytoplasm. It catalyses the reaction N-terminal L-glutamyl-[protein] + L-leucyl-tRNA(Leu) = N-terminal L-leucyl-L-glutamyl-[protein] + tRNA(Leu) + H(+). The enzyme catalyses N-terminal L-aspartyl-[protein] + L-leucyl-tRNA(Leu) = N-terminal L-leucyl-L-aspartyl-[protein] + tRNA(Leu) + H(+). Its function is as follows. Functions in the N-end rule pathway of protein degradation where it conjugates Leu from its aminoacyl-tRNA to the N-termini of proteins containing an N-terminal aspartate or glutamate. The sequence is that of Aspartate/glutamate leucyltransferase from Bradyrhizobium sp. (strain BTAi1 / ATCC BAA-1182).